A 206-amino-acid chain; its full sequence is Large ribosomal subunit protein uL4 (206 aa).

It belongs to the universal ribosomal protein uL4 family. In terms of assembly, part of the 50S ribosomal subunit.

Functionally, one of the primary rRNA binding proteins, this protein initially binds near the 5'-end of the 23S rRNA. It is important during the early stages of 50S assembly. It makes multiple contacts with different domains of the 23S rRNA in the assembled 50S subunit and ribosome. Forms part of the polypeptide exit tunnel. This Nitrobacter winogradskyi (strain ATCC 25391 / DSM 10237 / CIP 104748 / NCIMB 11846 / Nb-255) protein is Large ribosomal subunit protein uL4.